Consider the following 454-residue polypeptide: Bifunctional protein GlmU (454 aa).

A pyrophosphorylase region spans residues Met1 to Arg228. UDP-N-acetyl-alpha-D-glucosamine contacts are provided by residues Leu8–Gly11, Lys22, Gln73, and Gly78–Thr79. Asp103 provides a ligand contact to Mg(2+). The UDP-N-acetyl-alpha-D-glucosamine site is built by Gly140, Glu154, Asn169, and Asn226. Asn226 contacts Mg(2+). A linker region spans residues Ala229–Asn249. Positions Gly250–Lys454 are N-acetyltransferase. 2 residues coordinate UDP-N-acetyl-alpha-D-glucosamine: Arg331 and Lys349. The active-site Proton acceptor is the His361. Tyr364 and Asn375 together coordinate UDP-N-acetyl-alpha-D-glucosamine. Residues Asn384–Tyr385, Ala421, and Arg438 each bind acetyl-CoA.

This sequence in the N-terminal section; belongs to the N-acetylglucosamine-1-phosphate uridyltransferase family. The protein in the C-terminal section; belongs to the transferase hexapeptide repeat family. Homotrimer. Mg(2+) is required as a cofactor.

The protein resides in the cytoplasm. It carries out the reaction alpha-D-glucosamine 1-phosphate + acetyl-CoA = N-acetyl-alpha-D-glucosamine 1-phosphate + CoA + H(+). It catalyses the reaction N-acetyl-alpha-D-glucosamine 1-phosphate + UTP + H(+) = UDP-N-acetyl-alpha-D-glucosamine + diphosphate. It participates in nucleotide-sugar biosynthesis; UDP-N-acetyl-alpha-D-glucosamine biosynthesis; N-acetyl-alpha-D-glucosamine 1-phosphate from alpha-D-glucosamine 6-phosphate (route II): step 2/2. The protein operates within nucleotide-sugar biosynthesis; UDP-N-acetyl-alpha-D-glucosamine biosynthesis; UDP-N-acetyl-alpha-D-glucosamine from N-acetyl-alpha-D-glucosamine 1-phosphate: step 1/1. Its pathway is bacterial outer membrane biogenesis; LPS lipid A biosynthesis. Functionally, catalyzes the last two sequential reactions in the de novo biosynthetic pathway for UDP-N-acetylglucosamine (UDP-GlcNAc). The C-terminal domain catalyzes the transfer of acetyl group from acetyl coenzyme A to glucosamine-1-phosphate (GlcN-1-P) to produce N-acetylglucosamine-1-phosphate (GlcNAc-1-P), which is converted into UDP-GlcNAc by the transfer of uridine 5-monophosphate (from uridine 5-triphosphate), a reaction catalyzed by the N-terminal domain. This chain is Bifunctional protein GlmU, found in Clostridium perfringens (strain SM101 / Type A).